Consider the following 151-residue polypeptide: Nascent polypeptide-associated complex subunit beta (151 aa).

Residues 32-97 (EQDDTKLMEA…PQEKDVTQLI (66 aa)) form the NAC-A/B domain. The tract at residues 122–151 (GKTPSMGGENAGADEDIPDLIEGQKFDEVE) is disordered.

Belongs to the NAC-beta family. As to quaternary structure, part of the nascent polypeptide-associated complex (NAC), consisting of EGD2 and EGD1. NAC associates with ribosomes via EGD1.

The protein localises to the cytoplasm. Its subcellular location is the nucleus. In terms of biological role, component of the nascent polypeptide-associated complex (NAC), a dynamic component of the ribosomal exit tunnel, protecting the emerging polypeptides from interaction with other cytoplasmic proteins to ensure appropriate nascent protein targeting. The NAC complex also promotes mitochondrial protein import by enhancing productive ribosome interactions with the outer mitochondrial membrane and blocks the inappropriate interaction of ribosomes translating non-secretory nascent polypeptides with translocation sites in the membrane of the endoplasmic reticulum. EGD1 may act as a transcription factor that exert a negative effect on the expression of several genes that are transcribed by RNA polymerase II. The chain is Nascent polypeptide-associated complex subunit beta (EGD1) from Meyerozyma guilliermondii (strain ATCC 6260 / CBS 566 / DSM 6381 / JCM 1539 / NBRC 10279 / NRRL Y-324) (Yeast).